The primary structure comprises 392 residues: Adenine nucleotide transporter BT1, chloroplastic/mitochondrial (392 aa).

Solcar repeat units lie at residues 108-191 (NPSL…VNKK), 202-286 (IPIP…LRKA), and 296-384 (IGNI…CKKI). Helical transmembrane passes span 113–133 (RLLS…PLET), 168–188 (LVNV…FETV), 204–224 (IPAS…LTYP), 263–283 (APSL…YDSL), 302–322 (LLIG…LEVA), and 359–379 (GLGP…MCYE).

It belongs to the mitochondrial carrier (TC 2.A.29) family. Expressed in root tips, the central cylinder of young roots, and maturating and germinating pollen.

The protein localises to the plastid. It localises to the chloroplast inner membrane. Its subcellular location is the mitochondrion inner membrane. Inhibited by pyridoxal 5-phosphate but not mersalyl. In terms of biological role, probable mitochondrial adenylate carrier that catalyzes the transport of ATP, ADP and AMP, but not ADP-glucose. Recombinant BT1 shows a unidirectional mode of transport in intact E.coli cells. May function as a plastidial nucleotide uniport carrier required to export newly synthesized adenylates into the cytosol. May be involved in abiotic stress response. In Arabidopsis thaliana (Mouse-ear cress), this protein is Adenine nucleotide transporter BT1, chloroplastic/mitochondrial (BT1).